The following is a 65-amino-acid chain: DNA-directed RNA polymerase subunit Rpo10 (65 aa).

The Zn(2+) site is built by Cys-7, Cys-10, Cys-44, and Cys-45.

This sequence belongs to the archaeal Rpo10/eukaryotic RPB10 RNA polymerase subunit family. In terms of assembly, part of the RNA polymerase complex. The cofactor is Zn(2+).

It localises to the cytoplasm. The enzyme catalyses RNA(n) + a ribonucleoside 5'-triphosphate = RNA(n+1) + diphosphate. Its function is as follows. DNA-dependent RNA polymerase (RNAP) catalyzes the transcription of DNA into RNA using the four ribonucleoside triphosphates as substrates. In Thermococcus onnurineus (strain NA1), this protein is DNA-directed RNA polymerase subunit Rpo10.